A 197-amino-acid polypeptide reads, in one-letter code: 7-methyl-GTP pyrophosphatase (197 aa).

Asp-73 (proton acceptor) is an active-site residue.

It belongs to the Maf family. YceF subfamily. It depends on a divalent metal cation as a cofactor.

Its subcellular location is the cytoplasm. The catalysed reaction is N(7)-methyl-GTP + H2O = N(7)-methyl-GMP + diphosphate + H(+). In terms of biological role, nucleoside triphosphate pyrophosphatase that hydrolyzes 7-methyl-GTP (m(7)GTP). May have a dual role in cell division arrest and in preventing the incorporation of modified nucleotides into cellular nucleic acids. The sequence is that of 7-methyl-GTP pyrophosphatase from Alcanivorax borkumensis (strain ATCC 700651 / DSM 11573 / NCIMB 13689 / SK2).